The following is a 236-amino-acid chain: RING-H2 finger protein ATL7 (236 aa).

Residues 31–51 (AFIFSVPICFTFIVLFVLYVI) form a helical membrane-spanning segment. The RING-type; atypical zinc finger occupies 111 to 153 (CSVCLGDYQAEEKLQQMPSCGHTFHMECIDLWLTSHTTCPLCR). Residues 176–196 (ENSNGGEASTQPDSQSATEAI) are compositionally biased toward polar residues. Residues 176 to 236 (ENSNGGEAST…SDGCCTCRLG (61 aa)) are disordered. Basic and acidic residues predominate over residues 197–221 (SHTDDVEEGNRDSQEVSKETEENDR).

This sequence belongs to the RING-type zinc finger family. ATL subfamily.

It is found in the membrane. It carries out the reaction S-ubiquitinyl-[E2 ubiquitin-conjugating enzyme]-L-cysteine + [acceptor protein]-L-lysine = [E2 ubiquitin-conjugating enzyme]-L-cysteine + N(6)-ubiquitinyl-[acceptor protein]-L-lysine.. The protein operates within protein modification; protein ubiquitination. The polypeptide is RING-H2 finger protein ATL7 (ATL7) (Arabidopsis thaliana (Mouse-ear cress)).